We begin with the raw amino-acid sequence, 400 residues long: Lysophospholipid transporter LplT (400 aa).

A run of 12 helical transmembrane segments spans residues 19-39 (VIVA…ATLA), 53-73 (VLQM…GQIA), 91-111 (AGAA…LVGI), 139-159 (LMEA…GVLA), 164-184 (IAAL…NLFI), 195-213 (SWRL…VVLW), 227-247 (LFWG…PVAL), 257-277 (YLNA…AKLV), 281-301 (TVSR…IFSL), 304-324 (ALLP…FFVV), 352-372 (NSAM…GVPA), and 373-393 (VAIG…LWIW).

This sequence belongs to the major facilitator superfamily. LplT (TC 2.A.1.42) family.

The protein localises to the cell inner membrane. Its function is as follows. Catalyzes the facilitated diffusion of 2-acyl-glycero-3-phosphoethanolamine (2-acyl-GPE) into the cell. The sequence is that of Lysophospholipid transporter LplT from Salmonella newport (strain SL254).